Here is a 163-residue protein sequence, read N- to C-terminus: NADH-quinone oxidoreductase subunit I (163 aa).

4Fe-4S ferredoxin-type domains are found at residues 54-84 and 94-123; these read LRRY…IDSA and TRYD…ETHI. The [4Fe-4S] cluster site is built by Cys-64, Cys-67, Cys-70, Cys-74, Cys-103, Cys-106, Cys-109, and Cys-113.

It belongs to the complex I 23 kDa subunit family. NDH-1 is composed of 14 different subunits. Subunits NuoA, H, J, K, L, M, N constitute the membrane sector of the complex. The cofactor is [4Fe-4S] cluster.

It is found in the cell inner membrane. It catalyses the reaction a quinone + NADH + 5 H(+)(in) = a quinol + NAD(+) + 4 H(+)(out). In terms of biological role, NDH-1 shuttles electrons from NADH, via FMN and iron-sulfur (Fe-S) centers, to quinones in the respiratory chain. The immediate electron acceptor for the enzyme in this species is believed to be ubiquinone. Couples the redox reaction to proton translocation (for every two electrons transferred, four hydrogen ions are translocated across the cytoplasmic membrane), and thus conserves the redox energy in a proton gradient. The polypeptide is NADH-quinone oxidoreductase subunit I (Xylella fastidiosa (strain 9a5c)).